The chain runs to 364 residues: UDP-N-acetylglucosamine--N-acetylmuramyl-(pentapeptide) pyrophosphoryl-undecaprenol N-acetylglucosamine transferase (364 aa).

UDP-N-acetyl-alpha-D-glucosamine contacts are provided by residues 13–15, Asn125, Arg165, Ser192, and Gln293; that span reads TGG.

Belongs to the glycosyltransferase 28 family. MurG subfamily.

It localises to the cell inner membrane. The enzyme catalyses di-trans,octa-cis-undecaprenyl diphospho-N-acetyl-alpha-D-muramoyl-L-alanyl-D-glutamyl-meso-2,6-diaminopimeloyl-D-alanyl-D-alanine + UDP-N-acetyl-alpha-D-glucosamine = di-trans,octa-cis-undecaprenyl diphospho-[N-acetyl-alpha-D-glucosaminyl-(1-&gt;4)]-N-acetyl-alpha-D-muramoyl-L-alanyl-D-glutamyl-meso-2,6-diaminopimeloyl-D-alanyl-D-alanine + UDP + H(+). The protein operates within cell wall biogenesis; peptidoglycan biosynthesis. Cell wall formation. Catalyzes the transfer of a GlcNAc subunit on undecaprenyl-pyrophosphoryl-MurNAc-pentapeptide (lipid intermediate I) to form undecaprenyl-pyrophosphoryl-MurNAc-(pentapeptide)GlcNAc (lipid intermediate II). The sequence is that of UDP-N-acetylglucosamine--N-acetylmuramyl-(pentapeptide) pyrophosphoryl-undecaprenol N-acetylglucosamine transferase from Cereibacter sphaeroides (strain ATCC 17025 / ATH 2.4.3) (Rhodobacter sphaeroides).